The sequence spans 638 residues: Nucleolar protein 4 (638 aa).

4 disordered regions span residues 210–312 (QQDE…SPLS), 343–403 (EREA…TDGV), 503–535 (NAAK…TYST), and 573–603 (SSGP…QLSP). A compositionally biased stretch (acidic residues) spans 211–225 (QDEDESSIESDEFDM). 4 stretches are compositionally biased toward polar residues: residues 229 to 254 (TRMS…NLHG), 263 to 281 (ESFN…SGGT), 302 to 312 (QPLNLSDSPLS), and 351 to 363 (SKSP…SYDS). Composition is skewed to basic and acidic residues over residues 364–374 (GKNESVDRGAE), 391–403 (HDDS…TDGV), and 503–515 (NAAK…RQQD). A compositionally biased stretch (low complexity) spans 588–597 (SSGSSSSSNS).

In terms of tissue distribution, expressed predominantly in fetal brain, adult brain and testis.

The protein resides in the nucleus. Its subcellular location is the nucleolus. This chain is Nucleolar protein 4 (NOL4), found in Homo sapiens (Human).